The sequence spans 73 residues: UPF0235 protein LA_1736 (73 aa).

It belongs to the UPF0235 family.

The protein is UPF0235 protein LA_1736 of Leptospira interrogans serogroup Icterohaemorrhagiae serovar Lai (strain 56601).